A 393-amino-acid chain; its full sequence is Ig heavy chain C region (393 aa).

3 Ig-like domains span residues 63-157 (PTVI…RNIT), 168-260 (PVIK…ASIH), and 270-370 (PSVS…RTVN). 8 N-linked (GlcNAc...) asparagine glycosylation sites follow: Asn-119, Asn-155, Asn-200, Asn-230, Asn-329, Asn-366, Asn-370, and Asn-380.

This Heterodontus francisci (Horn shark) protein is Ig heavy chain C region.